Reading from the N-terminus, the 288-residue chain is Putative transcription factor kapC (288 aa).

Positions 1 to 10 (MQPTLAPAPH) are enriched in pro residues. Positions 1-121 (MQPTLAPAPH…AAQRAFRQRK (121 aa)) are disordered. Positions 26–41 (HDQLLAAHQHLSHPQQ) are enriched in low complexity. Pro residues predominate over residues 42–54 (ARPPPPPPQPPHM). Over residues 84-93 (QPDLSGQESP) the composition is skewed to polar residues. The bZIP domain maps to 100 to 163 (PLSTSKRAAQ…EYIINLQSRL (64 aa)). Residues 101–124 (LSTSKRAAQNRAAQRAFRQRKEAH) form a basic motif region. Positions 106-116 (RAAQNRAAQRA) are enriched in low complexity. The tract at residues 128–159 (LEGKVKAYETMGEAIKALQAENYQLREYIINL) is leucine-zipper. Disordered regions lie at residues 172 to 226 (ELPG…NDDM) and 242 to 288 (PPTE…PLIS). Pro residues predominate over residues 202 to 212 (PVPPPTAPQQP). Over residues 213-222 (QPAQNQASAP) the composition is skewed to low complexity.

This sequence belongs to the bZIP family.

Its subcellular location is the nucleus. Putative transcription factor. This chain is Putative transcription factor kapC (kapC), found in Aspergillus clavatus (strain ATCC 1007 / CBS 513.65 / DSM 816 / NCTC 3887 / NRRL 1 / QM 1276 / 107).